A 193-amino-acid chain; its full sequence is Gas vesicle protein C (193 aa).

5 repeats span residues 19-51, 52-84, 85-117, 118-150, and 151-183; these read VAELSLETREFLSVTTAKRQEQAEKQAQELQAF, YKDLQETSQQFLSETAQARIAQAEKQAQELLAF, HKELQETSQQFLSATAQARIAQAEKQAQELLAF, YQEVRETSQQFLSATAQARIAQAEKQAQELLAF, and HKELQETSQQFLSATADARTAQAKEQKESLLKF. Positions 19–183 are 5 X 33 AA tandem repeats; that stretch reads VAELSLETRE…KEQKESLLKF (165 aa).

The protein belongs to the gas vesicle GvpC family.

It is found in the gas vesicle. In terms of biological role, confers stability, involved in shaping gas vesicles (GV), hollow, gas-filled proteinaceous nanostructures. During planktonic growth they allow positioning of the organism at a favorable depth for light or nutrient acquisition. The ratio of GvpA:GvpC is estimated to be 25:1. GvpC strengthens the GV wall, probably by connecting several GvpA proteins in the same and/or adjacent ribs. Removal of GvpC by SDS reduces the critical collapse pressure (CCP) of stored gas vesicles from 0.23 Mpa to 0.08 MPa. Removal of GvpC by urea reduces CCP of freshly isolated GVs from 0.550 MPa to 0.190 MPa; addition of recombinant GvpC restores CCP to 0.508 MPa. As the turgor pressure in this species is usually 0.35 MPa (plus the water column pressure in its growth environment), this protein is essential for GV formation. This Dolichospermum flosaquae (Anabaena flos-aquae) protein is Gas vesicle protein C.